A 217-amino-acid chain; its full sequence is Uracil-DNA glycosylase (217 aa).

Asp-62 acts as the Proton acceptor in catalysis.

This sequence belongs to the uracil-DNA glycosylase (UDG) superfamily. UNG family.

The protein resides in the cytoplasm. The enzyme catalyses Hydrolyzes single-stranded DNA or mismatched double-stranded DNA and polynucleotides, releasing free uracil.. Its function is as follows. Excises uracil residues from the DNA which can arise as a result of misincorporation of dUMP residues by DNA polymerase or due to deamination of cytosine. This Streptococcus pyogenes serotype M1 protein is Uracil-DNA glycosylase.